The following is a 110-amino-acid chain: HIT-like protein CPn_0488/CP_0266/CPj0488/CpB0508 (110 aa).

An HIT domain is found at 3-110 (VFKQIIDGLI…LGGRPLGAIA (108 aa)). Positions 95–99 (HLHIH) match the Histidine triad motif motif.

The polypeptide is HIT-like protein CPn_0488/CP_0266/CPj0488/CpB0508 (Chlamydia pneumoniae (Chlamydophila pneumoniae)).